The chain runs to 286 residues: uncharacterized protein (286 aa).

Positions 26-268 (PLIILCHGFC…DACHYDIYEG (243 aa)) constitute an AB hydrolase-1 domain.

This sequence belongs to the AB hydrolase superfamily.

This is an uncharacterized protein from Escherichia coli.